Consider the following 243-residue polypeptide: Leucyl/phenylalanyl-tRNA--protein transferase (243 aa).

It belongs to the L/F-transferase family.

The protein localises to the cytoplasm. The catalysed reaction is N-terminal L-lysyl-[protein] + L-leucyl-tRNA(Leu) = N-terminal L-leucyl-L-lysyl-[protein] + tRNA(Leu) + H(+). It carries out the reaction N-terminal L-arginyl-[protein] + L-leucyl-tRNA(Leu) = N-terminal L-leucyl-L-arginyl-[protein] + tRNA(Leu) + H(+). It catalyses the reaction L-phenylalanyl-tRNA(Phe) + an N-terminal L-alpha-aminoacyl-[protein] = an N-terminal L-phenylalanyl-L-alpha-aminoacyl-[protein] + tRNA(Phe). Functions in the N-end rule pathway of protein degradation where it conjugates Leu, Phe and, less efficiently, Met from aminoacyl-tRNAs to the N-termini of proteins containing an N-terminal arginine or lysine. The polypeptide is Leucyl/phenylalanyl-tRNA--protein transferase (Xylella fastidiosa (strain 9a5c)).